The sequence spans 385 residues: SH3 domain-binding protein 5-like (385 aa).

Residues 1–58 are disordered; it reads MAELRQIPGGRETPQGELRPEVVEDEVPRSPVAEEPGGGGSNSSEAKLSPREEEELDP. Threonine 13 is modified (phosphothreonine). Residues 18-28 are compositionally biased toward basic and acidic residues; sequence LRPEVVEDEVP. Phosphoserine is present on residues serine 30 and serine 49. Coiled-coil stretches lie at residues 59 to 140 and 169 to 272; these read RIQE…YERA and WQEM…EQIH. The disordered stretch occupies residues 272–328; the sequence is HARRRGQPAHTPGQRRSSPVGAEAGPDGGEDADSGIIEGAEGGGLEEGVSLGPGAAP. Positions 318–328 are enriched in low complexity; sequence EGVSLGPGAAP. Phosphoserine is present on residues serine 343, serine 350, serine 358, and serine 362. The segment at 359-385 is disordered; it reads DHTSLDGQELGPRSGGRGGRHQRSISL. The span at 376-385 shows a compositional bias: basic residues; that stretch reads GGRHQRSISL.

The protein belongs to the SH3BP5 family.

Its function is as follows. Functions as a guanine nucleotide exchange factor (GEF) for RAB11A. The chain is SH3 domain-binding protein 5-like (SH3BP5L) from Bos taurus (Bovine).